The following is a 208-amino-acid chain: Small ribosomal subunit protein uS4 (208 aa).

The S4 RNA-binding domain occupies 98-168 (RRLDNVVFRL…DSLDTVVRRG (71 aa)).

The protein belongs to the universal ribosomal protein uS4 family. In terms of assembly, part of the 30S ribosomal subunit. Contacts protein S5. The interaction surface between S4 and S5 is involved in control of translational fidelity.

Functionally, one of the primary rRNA binding proteins, it binds directly to 16S rRNA where it nucleates assembly of the body of the 30S subunit. In terms of biological role, with S5 and S12 plays an important role in translational accuracy. This chain is Small ribosomal subunit protein uS4, found in Desulforapulum autotrophicum (strain ATCC 43914 / DSM 3382 / VKM B-1955 / HRM2) (Desulfobacterium autotrophicum).